The sequence spans 546 residues: MAGLDNAVMVRDDQGNPFILVRDQEKKRRLHGIDAVKSHILATKTVANIVRTSLGPRGLDKILISPDGEITVTNDGATILDQMEVEHQIAKLLVQLSKSQDDEIGDGTTGVVVLAGALLEQAEALIDKGIHPIRIADGYEKACQVAVKHLDAISDVVDFSPENTTNLFRSAKTSLGSKVVSKAHDHFANIAVDAVLSVADLQRKDVDFELIKVDGKVGGSVDDTKLVKGVVVDKDMSHPQMPHRIENAKIAILTCPFEPPKPKTKHKLDITSVSEFEALQAYEKEKFQEMIKHVKDAGANLVICQWGFDDEANHLLLQNNLPAVRWVGGPEIELIAIATNGRIVPRFEDLSSDKLGSAGIVREVSFGTTRDKILVIEKCANSRAVTVFVRGSNKMIVDEAKRALHDALCVVRNLIRDNRVVYGGGAAEISCSLAVTKEAEKIPGIDQYSMGAFADALDTIPLALAENSGLSSIEALTAVKARHVKENKAYLGIDCLQTGSNDMRKQFVIDPLIGKKQQLLLATQLCRMVLKVNDIIVAGSKDDDYN.

The protein belongs to the TCP-1 chaperonin family. Heterooligomeric complex of about 850 to 900 kDa that forms two stacked rings, 12 to 16 nm in diameter.

It is found in the cytoplasm. Molecular chaperone; assists the folding of proteins upon ATP hydrolysis. Known to play a role, in vitro, in the folding of actin and tubulin. This is T-complex protein 1 subunit epsilon (cct5) from Schizosaccharomyces pombe (strain 972 / ATCC 24843) (Fission yeast).